The chain runs to 456 residues: Phosphomethylpyrimidine synthase (456 aa).

Residues N80, M109, Y139, H175, 195–197 (SRG), 236–239 (DSLR), and E275 contribute to the substrate site. H279 serves as a coordination point for Zn(2+). Y302 is a binding site for substrate. H343 is a Zn(2+) binding site. [4Fe-4S] cluster is bound by residues C423, C426, and C431.

The protein belongs to the ThiC family. [4Fe-4S] cluster is required as a cofactor.

The enzyme catalyses 5-amino-1-(5-phospho-beta-D-ribosyl)imidazole + S-adenosyl-L-methionine = 4-amino-2-methyl-5-(phosphooxymethyl)pyrimidine + CO + 5'-deoxyadenosine + formate + L-methionine + 3 H(+). The protein operates within cofactor biosynthesis; thiamine diphosphate biosynthesis. In terms of biological role, catalyzes the synthesis of the hydroxymethylpyrimidine phosphate (HMP-P) moiety of thiamine from aminoimidazole ribotide (AIR) in a radical S-adenosyl-L-methionine (SAM)-dependent reaction. The chain is Phosphomethylpyrimidine synthase from Prochlorococcus marinus subsp. pastoris (strain CCMP1986 / NIES-2087 / MED4).